The primary structure comprises 214 residues: Orotate phosphoribosyltransferase (214 aa).

K26 contributes to the 5-phospho-alpha-D-ribose 1-diphosphate binding site. Orotate is bound at residue 34–35 (FF). 5-phospho-alpha-D-ribose 1-diphosphate is bound by residues 72 to 73 (YK), R99, K100, K103, H105, and 124 to 132 (DDVITAGTA). Orotate contacts are provided by T128 and R157.

Belongs to the purine/pyrimidine phosphoribosyltransferase family. PyrE subfamily. As to quaternary structure, homodimer. The cofactor is Mg(2+).

It carries out the reaction orotidine 5'-phosphate + diphosphate = orotate + 5-phospho-alpha-D-ribose 1-diphosphate. It participates in pyrimidine metabolism; UMP biosynthesis via de novo pathway; UMP from orotate: step 1/2. Its function is as follows. Catalyzes the transfer of a ribosyl phosphate group from 5-phosphoribose 1-diphosphate to orotate, leading to the formation of orotidine monophosphate (OMP). This is Orotate phosphoribosyltransferase from Pseudomonas fluorescens (strain Pf0-1).